We begin with the raw amino-acid sequence, 355 residues long: uncharacterized protein (355 aa).

The transit peptide at 1 to 49 directs the protein to the chloroplast; sequence MPMTVVSGRFSTALLPTCFSLSRLHSVKYAAQRRVVFVSRSAHASSASV.

It belongs to the methyltransferase superfamily.

Its subcellular location is the plastid. The protein localises to the chloroplast. It is found in the plastoglobule. This is an uncharacterized protein from Arabidopsis thaliana (Mouse-ear cress).